Consider the following 122-residue polypeptide: Holo-[acyl-carrier-protein] synthase (122 aa).

2 residues coordinate Mg(2+): Asp-5 and Glu-54.

It belongs to the P-Pant transferase superfamily. AcpS family. It depends on Mg(2+) as a cofactor.

Its subcellular location is the cytoplasm. The enzyme catalyses apo-[ACP] + CoA = holo-[ACP] + adenosine 3',5'-bisphosphate + H(+). Transfers the 4'-phosphopantetheine moiety from coenzyme A to a Ser of acyl-carrier-protein. The polypeptide is Holo-[acyl-carrier-protein] synthase (Aquifex aeolicus (strain VF5)).